A 407-amino-acid chain; its full sequence is Tyrosine--tRNA ligase (407 aa).

The 'HIGH' region motif lies at 47–56 (PTAPDLHLGA). Residues 231–235 (KMSKS) carry the 'KMSKS' region motif. Lysine 234 provides a ligand contact to ATP. Residues 342 to 403 (PRLSQLLVQV…GKRHFARVAL (62 aa)) enclose the S4 RNA-binding domain.

Belongs to the class-I aminoacyl-tRNA synthetase family. TyrS type 2 subfamily. As to quaternary structure, homodimer.

The protein resides in the cytoplasm. The catalysed reaction is tRNA(Tyr) + L-tyrosine + ATP = L-tyrosyl-tRNA(Tyr) + AMP + diphosphate + H(+). Functionally, catalyzes the attachment of tyrosine to tRNA(Tyr) in a two-step reaction: tyrosine is first activated by ATP to form Tyr-AMP and then transferred to the acceptor end of tRNA(Tyr). The protein is Tyrosine--tRNA ligase of Acidithiobacillus ferrooxidans (Thiobacillus ferrooxidans).